We begin with the raw amino-acid sequence, 57 residues long: Large ribosomal subunit protein bL32 (57 aa).

The span at Met-1 to Arg-22 shows a compositional bias: basic residues. A disordered region spans residues Met-1–Gly-35.

Belongs to the bacterial ribosomal protein bL32 family.

The sequence is that of Large ribosomal subunit protein bL32 (rpmF) from Synechocystis sp. (strain ATCC 27184 / PCC 6803 / Kazusa).